Consider the following 30-residue polypeptide: Photosystem I reaction center subunit XII (30 aa).

The helical transmembrane segment at V7 to Y29 threads the bilayer.

The protein belongs to the PsaM family.

The protein localises to the plastid. It is found in the chloroplast thylakoid membrane. The sequence is that of Photosystem I reaction center subunit XII from Trieres chinensis (Marine centric diatom).